We begin with the raw amino-acid sequence, 139 residues long: Putative pre-16S rRNA nuclease (139 aa).

This sequence belongs to the YqgF nuclease family.

It localises to the cytoplasm. Its function is as follows. Could be a nuclease involved in processing of the 5'-end of pre-16S rRNA. The chain is Putative pre-16S rRNA nuclease from Rippkaea orientalis (strain PCC 8801 / RF-1) (Cyanothece sp. (strain PCC 8801)).